Reading from the N-terminus, the 800-residue chain is Receptor like protein 26 (800 aa).

Residues 1–19 (MRLHFCSLLLLYCIVFVSS) form the signal peptide. Topologically, residues 20–733 (FLTTDALACL…EEEDEVIEWK (714 aa)) are extracellular. N-linked (GlcNAc...) asparagine glycosylation is found at asparagine 49, asparagine 61, asparagine 83, asparagine 96, asparagine 101, and asparagine 113. LRR repeat units follow at residues 89-113 (LHQL…EFSN), 115-138 (TRLE…ISNL), 139-161 (ILLT…VRNL), 162-185 (TKLS…LLPT), 187-212 (PFLS…SSSS), 214-235 (LVRL…ISKL), 236-259 (INLN…VFAP), 260-281 (LKSL…LSSD), 285-307 (PLSL…IFKT), 308-332 (LQNL…FWKL), 334-357 (RLSI…VLLN), and 358-381 (SSVQ…PLGS). 2 N-linked (GlcNAc...) asparagine glycosylation sites follow: asparagine 145 and asparagine 160. A glycan (N-linked (GlcNAc...) asparagine) is linked at asparagine 207. A glycan (N-linked (GlcNAc...) asparagine) is linked at asparagine 247. N-linked (GlcNAc...) asparagine glycans are attached at residues asparagine 342 and asparagine 357. One copy of the LRR 13; degenerate repeat lies at 382–401 (IYLSAWNNSFTGNIPLSICN). N-linked (GlcNAc...) asparagine glycans are attached at residues asparagine 388 and asparagine 401. 10 LRR repeats span residues 402–423 (RSSL…PQCL), 424–446 (SNLK…EFHS), 448–471 (AKTQ…LLNC), 472–494 (SSLR…WLKA), 495–519 (LPNL…DRGP), 522–546 (FPEL…FFVN), 591–615 (LTFY…IGLL), 616–639 (KELI…LANV), 640–663 (TELE…LGSL), and 665–688 (FLAY…QFSG). Asparagine 470 is a glycosylation site (N-linked (GlcNAc...) asparagine). N-linked (GlcNAc...) asparagine glycosylation is found at asparagine 622 and asparagine 638. Residues 734–754 (AVFFGYWPGLLLGLVMAHVIA) form a helical membrane-spanning segment. The Cytoplasmic portion of the chain corresponds to 755 to 800 (SFKPKWFVKILGPAKGKQVDPVRLFMNLDSRWDSFNNKDTVEEEVI).

This sequence belongs to the RLP family.

The protein localises to the cell membrane. The sequence is that of Receptor like protein 26 from Arabidopsis thaliana (Mouse-ear cress).